The chain runs to 547 residues: Chaperonin GroEL (547 aa).

ATP contacts are provided by residues 30-33, K51, 87-91, G415, and D496; these read TLGP and DGTTT. The interval 527–547 is disordered; it reads SDKEEPMPMRGGMGGMGGMDF. Residues 537–547 are compositionally biased toward gly residues; that stretch reads GGMGGMGGMDF.

It belongs to the chaperonin (HSP60) family. As to quaternary structure, forms a cylinder of 14 subunits composed of two heptameric rings stacked back-to-back. Interacts with the co-chaperonin GroES.

The protein localises to the cytoplasm. It catalyses the reaction ATP + H2O + a folded polypeptide = ADP + phosphate + an unfolded polypeptide.. Its function is as follows. Together with its co-chaperonin GroES, plays an essential role in assisting protein folding. The GroEL-GroES system forms a nano-cage that allows encapsulation of the non-native substrate proteins and provides a physical environment optimized to promote and accelerate protein folding. The polypeptide is Chaperonin GroEL (Rickettsia massiliae (strain Mtu5)).